The chain runs to 183 residues: Transcription termination/antitermination protein NusG (183 aa).

Residues 131–161 form the KOW domain; that stretch reads PGEEVRVTEGPFADFNGTVEEVDYEKGRLKV.

The protein belongs to the NusG family.

Functionally, participates in transcription elongation, termination and antitermination. This is Transcription termination/antitermination protein NusG from Pasteurella multocida (strain Pm70).